Consider the following 313-residue polypeptide: D-alanine--D-alanine ligase (313 aa).

The ATP-grasp domain maps to 108–308 (KLVWQQLGIP…YQELVVGVLA (201 aa)). Residue 138 to 193 (VAKLGLPLFVKPASEGSSVAVIKVKSADALPAALIEAVKYDKIVVVEKSVEGGGEY) participates in ATP binding. Aspartate 262, glutamate 275, and asparagine 277 together coordinate Mg(2+).

The protein belongs to the D-alanine--D-alanine ligase family. It depends on Mg(2+) as a cofactor. Requires Mn(2+) as cofactor.

It localises to the cytoplasm. The enzyme catalyses 2 D-alanine + ATP = D-alanyl-D-alanine + ADP + phosphate + H(+). The protein operates within cell wall biogenesis; peptidoglycan biosynthesis. In terms of biological role, cell wall formation. The polypeptide is D-alanine--D-alanine ligase (Paraburkholderia phytofirmans (strain DSM 17436 / LMG 22146 / PsJN) (Burkholderia phytofirmans)).